Consider the following 251-residue polypeptide: Hydroxyacylglutathione hydrolase (251 aa).

Residues H53, H55, D57, H58, H110, D127, and H165 each contribute to the Zn(2+) site.

The protein belongs to the metallo-beta-lactamase superfamily. Glyoxalase II family. Monomer. It depends on Zn(2+) as a cofactor.

The catalysed reaction is an S-(2-hydroxyacyl)glutathione + H2O = a 2-hydroxy carboxylate + glutathione + H(+). It participates in secondary metabolite metabolism; methylglyoxal degradation; (R)-lactate from methylglyoxal: step 2/2. In terms of biological role, thiolesterase that catalyzes the hydrolysis of S-D-lactoyl-glutathione to form glutathione and D-lactic acid. This is Hydroxyacylglutathione hydrolase from Escherichia coli (strain UTI89 / UPEC).